A 1048-amino-acid chain; its full sequence is Bifunctional heparan sulfate N-deacetylase/N-sulfotransferase (1048 aa).

Topologically, residues 1–172 (MTISGGNQHN…RRCFGINVRR (172 aa)) are cytoplasmic. A helical; Signal-anchor for type II membrane protein transmembrane segment spans residues 173–192 (CVLALLAITMVSIFYYTHYV). The heparan sulfate N-deacetylase stretch occupies residues 192 to 752 (VDTGVFNGLI…VRHKKIWSKT (561 aa)). Topologically, residues 193–1048 (DTGVFNGLIQ…WLKDDLSTGT (856 aa)) are lumenal. 2 N-linked (GlcNAc...) asparagine glycosylation sites follow: Asn388 and Asn555. The interval 753–1048 (KNCDSLPKFL…WLKDDLSTGT (296 aa)) is heparan sulfate N-sulfotransferase. Lys768 serves as the catalytic For sulfotransferase activity. 768 to 772 (KTGTT) contacts 3'-phosphoadenylyl sulfate. Asn823 is a glycosylation site (N-linked (GlcNAc...) asparagine). Ser877 serves as a coordination point for 3'-phosphoadenylyl sulfate. Asn892 carries N-linked (GlcNAc...) asparagine glycosylation. Residues Cys983 and Cys993 are joined by a disulfide bond. 998–1002 (KGRQY) provides a ligand contact to 3'-phosphoadenylyl sulfate.

Belongs to the sulfotransferase 1 family. NDST subfamily. As to quaternary structure, monomer.

Its subcellular location is the golgi apparatus membrane. The catalysed reaction is alpha-D-glucosaminyl-[heparan sulfate](n) + 3'-phosphoadenylyl sulfate = N-sulfo-alpha-D-glucosaminyl-[heparan sulfate](n) + adenosine 3',5'-bisphosphate + 2 H(+). The protein operates within glycan metabolism; heparan sulfate biosynthesis. It participates in glycan metabolism; heparin biosynthesis. Its function is as follows. Essential bifunctional enzyme that catalyzes both the N-deacetylation and the N-sulfation of glucosamine (GlcNAc) of the glycosaminoglycan in heparan sulfate. Modifies the GlcNAc-GlcA disaccharide repeating sugar backbone to make N-sulfated heparosan, a prerequisite substrate for later modifications in heparin biosynthesis. Plays a role in diffusion of morphogen wingless (wg) via its role in heparan sulfate proteoglycans (HSPGs) biosynthesis, HSPGs being required for movement of wg morphogens. Required for wg signaling during both embryonic and imaginal disk development. Also required for FGF receptor signaling. This Drosophila melanogaster (Fruit fly) protein is Bifunctional heparan sulfate N-deacetylase/N-sulfotransferase (sfl).